Consider the following 434-residue polypeptide: Beta-enolase (434 aa).

At Ala-2 the chain carries N-acetylalanine. Thr-72 carries the phosphothreonine modification. Phosphoserine occurs at positions 83 and 157. The substrate site is built by His-158 and Glu-167. Ser-176 is modified (phosphoserine). Thr-205 is subject to Phosphothreonine. Catalysis depends on Glu-210, which acts as the Proton donor. At Thr-229 the chain carries Phosphothreonine. Position 236 is a phosphotyrosine (Tyr-236). Asp-245 serves as a coordination point for Mg(2+). Ser-263 is subject to Phosphoserine. Substrate-binding residues include Glu-293 and Asp-318. The Mg(2+) site is built by Glu-293 and Asp-318. The active-site Proton acceptor is the Lys-343. Residues 370-373 and Lys-394 each bind substrate; that span reads SHRS.

The protein belongs to the enolase family. In terms of assembly, mammalian enolase is composed of 3 isozyme subunits, alpha, beta and gamma, which can form homodimers or heterodimers which are cell-type and development-specific. Interacts with PNKD. It depends on Mg(2+) as a cofactor. As to expression, the alpha/alpha homodimer is expressed in embryo and in most adult tissues. The alpha/beta heterodimer and the beta/beta homodimer are found in striated muscle, and the alpha/gamma heterodimer and the gamma/gamma homodimer in neurons.

The protein localises to the cytoplasm. The catalysed reaction is (2R)-2-phosphoglycerate = phosphoenolpyruvate + H2O. It participates in carbohydrate degradation; glycolysis; pyruvate from D-glyceraldehyde 3-phosphate: step 4/5. Functionally, glycolytic enzyme that catalyzes the conversion of 2-phosphoglycerate to phosphoenolpyruvate. Appears to have a function in striated muscle development and regeneration. The polypeptide is Beta-enolase (ENO3) (Homo sapiens (Human)).